A 31-amino-acid chain; its full sequence is Nemertide alpha-6 (31 aa).

3 cysteine pairs are disulfide-bonded: cysteine 2–cysteine 16, cysteine 9–cysteine 20, and cysteine 15–cysteine 26. Residues proline 28 and proline 29 each carry the 4-hydroxyproline modification.

The protein belongs to the nemertide family. In terms of tissue distribution, confined to the epidermis and to the mucus layer.

Its subcellular location is the secreted. In terms of biological role, highly potent toxin against both insect and some mammalian sodium channels (Nav). It potently inhibits inactivation of insect sodium channels of B.germanica (BgNav1) (EC(50)=2.6 nM) and also delays the inactivation of mammalian Nav with potent activity on Nav1.1/SCN1A (hNav1.1/SCN1A; EC(50)=7.9 nM, rNav1.2/SCN2A; EC(50)=24.3 nM, rNav1.3/SCN3A; EC(50)=105.6 nM, rNav1.4/SCN4A; EC(50)=46.4 nM, hNav1.5/SCN5A; EC(50)=215.2 nM, mNav1.6/SCN8A; EC(50)=36.3 nM, hNav1.9/SCN9A; EC(50)=97.2 nM). 1 uM is enough to completely inhibits the inactivation, resulting in sustained non-inactivating currents. In addition, the toxin significantly enhances the recovery from inactivation, and the open state is not required for the toxin to interact with the channel. In vivo, injection into brine shrimp (Artemia salina) stops movement or causes death after 24 hours (EC(50)=2.8 uM). The sequence is that of Nemertide alpha-6 from Lineus sanguineus (Ribbon worm).